The chain runs to 93 residues: MEEYYFVKNFESLFEELSQKIAERPEGSGTVEAFDKGIHHLGKKIIEEAGEVWIAAEYQSDEELAEEMSQLLYWLQVMAHKRGLKLEDIYSYL.

The protein belongs to the PRA-PH family.

Its subcellular location is the cytoplasm. It catalyses the reaction 1-(5-phospho-beta-D-ribosyl)-ATP + H2O = 1-(5-phospho-beta-D-ribosyl)-5'-AMP + diphosphate + H(+). It functions in the pathway amino-acid biosynthesis; L-histidine biosynthesis; L-histidine from 5-phospho-alpha-D-ribose 1-diphosphate: step 2/9. The sequence is that of Phosphoribosyl-ATP pyrophosphatase from Corynebacterium aurimucosum (strain ATCC 700975 / DSM 44827 / CIP 107346 / CN-1) (Corynebacterium nigricans).